The chain runs to 395 residues: Xylose isomerase (395 aa).

Residues histidine 54 and aspartate 57 contribute to the active site. Mg(2+) contacts are provided by glutamate 181, glutamate 217, histidine 220, aspartate 245, aspartate 255, aspartate 257, and aspartate 293.

The protein belongs to the xylose isomerase family. As to quaternary structure, homotetramer. Requires Mg(2+) as cofactor.

Its subcellular location is the cytoplasm. It catalyses the reaction alpha-D-xylose = alpha-D-xylulofuranose. This chain is Xylose isomerase (xylA), found in Arthrobacter sp. (strain NRRL B3728).